The following is a 375-amino-acid chain: Succinyl-diaminopimelate desuccinylase (375 aa).

A Zn(2+)-binding site is contributed by H66. D68 is an active-site residue. D99 is a Zn(2+) binding site. Catalysis depends on E133, which acts as the Proton acceptor. Residues E134, E162, and H348 each contribute to the Zn(2+) site.

This sequence belongs to the peptidase M20A family. DapE subfamily. As to quaternary structure, homodimer. It depends on Zn(2+) as a cofactor. Requires Co(2+) as cofactor.

The enzyme catalyses N-succinyl-(2S,6S)-2,6-diaminopimelate + H2O = (2S,6S)-2,6-diaminopimelate + succinate. The protein operates within amino-acid biosynthesis; L-lysine biosynthesis via DAP pathway; LL-2,6-diaminopimelate from (S)-tetrahydrodipicolinate (succinylase route): step 3/3. Catalyzes the hydrolysis of N-succinyl-L,L-diaminopimelic acid (SDAP), forming succinate and LL-2,6-diaminopimelate (DAP), an intermediate involved in the bacterial biosynthesis of lysine and meso-diaminopimelic acid, an essential component of bacterial cell walls. The sequence is that of Succinyl-diaminopimelate desuccinylase from Aeromonas hydrophila subsp. hydrophila (strain ATCC 7966 / DSM 30187 / BCRC 13018 / CCUG 14551 / JCM 1027 / KCTC 2358 / NCIMB 9240 / NCTC 8049).